The sequence spans 50 residues: Temporin-SHa (50 aa).

An N-terminal signal peptide occupies residues 1–10; that stretch reads FLGTINLSLC. The propeptide occupies 11–35; sequence EQERDADEEERRDEPNESNVEVEKR. A Phenylalanine amide modification is found at Phe-48.

The protein belongs to the frog skin active peptide (FSAP) family. Temporin subfamily. In terms of tissue distribution, expressed by the skin glands.

It is found in the secreted. The protein localises to the target cell membrane. Amphipathic alpha-helical antimicrobial peptide with highly potent activity against Gram-positive bacteria, and potent activity Gram-negative bacteria and fungi (MIC=2-30 uM). Acts through membranolytic mechanism involving rapid membrane permeabilization and depolarization. Shows a direct extra-cellular antiviral activity probably through degradation of the viral envelope. Also shows a weak indirect antiviral activity by inhibiting virus replication. Also displays anti-trypanosoma and anti-leishmania (prosmastigotes and axenic amastigotes) activity through membranolytic mechanism. Also induces apoptosis in leishmania promastigotes at high peptide concentrations. Shows moderate hemolytic activity (LC(50)=25 uM). In contrast to many antibiotics, this peptide does not induce bacterial resistance. This is Temporin-SHa from Pelophylax saharicus (Sahara frog).